The sequence spans 665 residues: LisH domain-containing protein ARMC9 (665 aa).

In terms of domain architecture, LisH spans 7-39; the sequence is HESELLGLVKEYLDFAEFEDTLKTFLKECKIKG. A coiled-coil region spans residues 204–235; that stretch reads QSNKDVLQQLHQQLVEAERRSMTYLKRYNRIQ. Residue Ser-582 is modified to Phosphoserine. The segment covering 582 to 603 has biased composition (acidic residues); that stretch reads SDDDEDEDDEEDHDTMEADLDK. Disordered regions lie at residues 582–604 and 636–665; these read SDDD…LDKD and RRGT…GYPA.

Interacts with TOGARAM1, CCDC66, CEP104, CSPP1 and CEP290. Interacts with NDUFAF2.

Its subcellular location is the cytoplasm. It localises to the cytoskeleton. The protein resides in the cilium basal body. The protein localises to the cell projection. It is found in the cilium. Its subcellular location is the microtubule organizing center. It localises to the centrosome. The protein resides in the centriole. In terms of biological role, involved in ciliogenesis. It is required for appropriate acetylation and polyglutamylation of ciliary microtubules, and regulation of cilium length. Acts as a positive regulator of hedgehog (Hh)signaling. May participate in the trafficking and/or retention of GLI2 and GLI3 proteins at the ciliary tip. This Bos taurus (Bovine) protein is LisH domain-containing protein ARMC9 (ARMC9).